A 591-amino-acid polypeptide reads, in one-letter code: Pentatricopeptide repeat-containing protein At3g47530 (591 aa).

PPR repeat units follow at residues 76-110 (TLSH…SSLP), 112-146 (NPLS…GFLS), 147-177 (DSLL…IPKR), 178-208 (DTVS…MKND), 216-250 (DGVT…GLSG), 251-281 (ALNL…MRER), 282-316 (NVVS…GISP), 317-351 (EEQT…EFKI), and 354-384 (NLHH…MEMK). The tract at residues 389–464 (IWRTLLGACR…KPGCSAIELQ (76 aa)) is type E motif. The segment at 465–495 (GTVHEFIVDDVSHPRKEEIYKMLAEINQQLK) is type E(+) motif. The tract at residues 496–591 (IAGYVAEITS…GGSCSCNDFW (96 aa)) is type DYW motif.

It belongs to the PPR family. PCMP-H subfamily.

This Arabidopsis thaliana (Mouse-ear cress) protein is Pentatricopeptide repeat-containing protein At3g47530 (PCMP-H76).